The chain runs to 385 residues: Type III polyketide synthase C (385 aa).

A CoA-binding site is contributed by 56–63 (KLQHLCKS). Cys-165 acts as the Nucleophile in catalysis. 217 to 218 (GD) lines the substrate pocket. Residues Leu-267, 307-310 (GGPA), and Ala-310 each bind CoA.

The protein belongs to the thiolase-like superfamily. Chalcone/stilbene synthases family. In terms of assembly, homodimer.

It localises to the endoplasmic reticulum. Its pathway is secondary metabolite biosynthesis; flavonoid biosynthesis. Plant type III polyketide synthases (PKSs) that catalyzes the condensation of malonyl-CoA units with various CoA ester starter molecules to generate a diverse array of natural products including long-chain alkyl alpha-pyrones. This is Type III polyketide synthase C from Arabidopsis thaliana (Mouse-ear cress).